Consider the following 498-residue polypeptide: Glycerol kinase (498 aa).

Thr13 contributes to the ADP binding site. Positions 13, 14, and 15 each coordinate ATP. A sn-glycerol 3-phosphate-binding site is contributed by Thr13. Arg17 contributes to the ADP binding site. Sn-glycerol 3-phosphate contacts are provided by Arg83, Glu84, Tyr135, and Asp244. Arg83, Glu84, Tyr135, Asp244, and Gln245 together coordinate glycerol. ADP-binding residues include Thr266 and Gly309. ATP is bound by residues Thr266, Gly309, Gln313, and Gly410. Gly410 and Asn414 together coordinate ADP.

Belongs to the FGGY kinase family.

The catalysed reaction is glycerol + ATP = sn-glycerol 3-phosphate + ADP + H(+). It participates in polyol metabolism; glycerol degradation via glycerol kinase pathway; sn-glycerol 3-phosphate from glycerol: step 1/1. Inhibited by fructose 1,6-bisphosphate (FBP). Functionally, key enzyme in the regulation of glycerol uptake and metabolism. Catalyzes the phosphorylation of glycerol to yield sn-glycerol 3-phosphate. This chain is Glycerol kinase, found in Koribacter versatilis (strain Ellin345).